The following is a 338-amino-acid chain: Lipoate-protein ligase A (338 aa).

One can recognise a BPL/LPL catalytic domain in the interval 29 to 216 (PATQRVLFLW…AFFAHYGERV (188 aa)). ATP contacts are provided by residues R71, 76 to 79 (GAVF), and K134. K134 lines the (R)-lipoate pocket.

Belongs to the LplA family. As to quaternary structure, monomer.

The protein resides in the cytoplasm. It carries out the reaction L-lysyl-[lipoyl-carrier protein] + (R)-lipoate + ATP = N(6)-[(R)-lipoyl]-L-lysyl-[lipoyl-carrier protein] + AMP + diphosphate + H(+). Its pathway is protein modification; protein lipoylation via exogenous pathway; protein N(6)-(lipoyl)lysine from lipoate: step 1/2. It participates in protein modification; protein lipoylation via exogenous pathway; protein N(6)-(lipoyl)lysine from lipoate: step 2/2. Catalyzes both the ATP-dependent activation of exogenously supplied lipoate to lipoyl-AMP and the transfer of the activated lipoyl onto the lipoyl domains of lipoate-dependent enzymes. This is Lipoate-protein ligase A from Escherichia coli (strain K12 / MC4100 / BW2952).